Consider the following 1211-residue polypeptide: Endoplasmic reticulum transmembrane helix translocase (1211 aa).

The Cytoplasmic segment spans residues Met-1–Thr-23. Residues Phe-24–Tyr-44 traverse the membrane as a helical segment. At Gln-45 to Arg-54 the chain is on the lumenal side. A helical membrane pass occupies residues Tyr-55 to Asn-75. Over Thr-76–Thr-191 the chain is Cytoplasmic. Positions Thr-155–Pro-185 are A-domain; part 1. A helical transmembrane segment spans residues Leu-192–Trp-212. The Lumenal segment spans residues Cys-213–Asp-216. Residues Tyr-217 to Trp-237 form a helical membrane-spanning segment. The Cytoplasmic segment spans residues Gln-238–Ser-397. Residues Ser-250 to Glu-388 are A-domain; part 2. Residues Leu-398–Val-418 traverse the membrane as a helical segment. Topologically, residues Gly-419–Asn-1057 are lumenal. Residues Tyr-464–Glu-493 are P-domain; part 1. Asp-485 serves as the catalytic 4-aspartylphosphate intermediate. 2 residues coordinate Mg(2+): Asp-485 and Thr-487. ATP contacts are provided by residues Asp-485 to Thr-487, Phe-587, Arg-644, Asp-710, and Asp-824 to Asp-828. The tract at residues Met-495–Pro-685 is N-domain. Positions Glu-688–Ser-845 are P-domain; part 2. Asp-824 lines the Mg(2+) pocket. Residues Glu-846–Leu-955 are arm-like. Positions Lys-956 to Ala-971 are P-domain; part 3. A helical membrane pass occupies residues Thr-1058–Ile-1078. Residues Thr-1079 to Pro-1100 lie on the Cytoplasmic side of the membrane. The chain crosses the membrane as a helical span at residues Ser-1101–Ile-1121. The Lumenal portion of the chain corresponds to Asn-1122 to Lys-1136. Residues Gly-1137–Ser-1157 traverse the membrane as a helical segment. The Cytoplasmic portion of the chain corresponds to Pro-1158–Gln-1174. Residues Ile-1175–Met-1195 form a helical membrane-spanning segment. The Lumenal segment spans residues Lys-1196 to Asn-1211.

It belongs to the cation transport ATPase (P-type) (TC 3.A.3) family. Type V subfamily. Mg(2+) serves as cofactor.

Its subcellular location is the endoplasmic reticulum membrane. It carries out the reaction [protein]-with a C-terminal TM segment(out) + ATP + H2O = [protein]-with a C-terminal TM segment(in) + ADP + phosphate + H(+). Endoplasmic reticulum translocase required to remove mitochondrial transmembrane proteins mistargeted to the endoplasmic reticulum. Acts as a dislocase that mediates the ATP-dependent extraction of mislocalized mitochondrial transmembrane proteins from the endoplasmic reticulum membrane. Specifically binds mitochondrial tail-anchored transmembrane proteins: has an atypically large substrate-binding pocket that recognizes and binds moderately hydrophobic transmembranes with short hydrophilic lumenal domains. Involved in controlling nuclear calcium ion levels. Required for cytokinesis and stabilizing microtubules. Required for assembly of the forespore membrane. Involved in calcium transport to the endoplasmic reticulum. In Schizosaccharomyces pombe (strain 972 / ATCC 24843) (Fission yeast), this protein is Endoplasmic reticulum transmembrane helix translocase.